A 344-amino-acid chain; its full sequence is Tripartite motif-containing protein 44 (344 aa).

Disordered stretches follow at residues 1–25 (MASG…EPDE) and 66–165 (AWTP…EFDP). Over residues 75 to 92 (GAGKEEAEVKVEQEREIE) the composition is skewed to basic and acidic residues. Positions 93–165 (SEAGEESESE…ETEAESEFDP (73 aa)) are enriched in acidic residues. A B box-type zinc finger spans residues 174–215 (VAKRKCPDHGLDLSTYCQEDRQLICVLCPVIGAHQGHQLSTL). 4 residues coordinate Zn(2+): Cys179, His182, Cys201, and His207. Residues 290 to 325 (AHVTEILADIQSHMDRLMTQMAQAKEQLDTSNESAE) adopt a coiled-coil conformation. The segment at 309–344 (QMAQAKEQLDTSNESAEPKAEGDEEGPSGASEEEDT) is disordered. A compositionally biased stretch (acidic residues) spans 330 to 344 (GDEEGPSGASEEEDT). Phosphoserine occurs at positions 336 and 339.

As to quaternary structure, interacts (via coiled coil) with TRIM17 (via coiled coil). In terms of tissue distribution, highly expressed in testis.

Functionally, may play a role in the process of differentiation and maturation of neuronal cells. May regulate the activity of TRIM17. Is a negative regulator of PAX6 expression. The sequence is that of Tripartite motif-containing protein 44 (TRIM44) from Homo sapiens (Human).